Reading from the N-terminus, the 1113-residue chain is Sterol regulatory element binding protein sbp-1 (1113 aa).

A transcriptional activation (acidic) region spans residues 1–52; the sequence is MNEEFEGDVPMSDPFLSLVTKLDDIAPFPNNDPLDFDMEHNWQEPGPSQQPD. Disordered stretches follow at residues 24-68, 101-132, 206-274, and 290-345; these read DIAP…EYYD, LGGG…TSPP, SPYD…SPQN, and EVER…SQGT. The span at 229 to 238 shows a compositional bias: basic residues; the sequence is PHHHHHHPMP. The segment covering 324 to 337 has biased composition (acidic residues); it reads AEGDEDEDDEDSDS. Residues 355–368 are basic motif; it reads ERRTAHNLIEKKYR. Residues 355-405 enclose the bHLH domain; the sequence is ERRTAHNLIEKKYRCSINDRIQQLKVLLCGDEAKLSKSATLRRAIEHIEEV. A helix-loop-helix motif region spans residues 369–405; the sequence is CSINDRIQQLKVLLCGDEAKLSKSATLRRAIEHIEEV. The stretch at 395-422 forms a coiled coil; it reads LRRAIEHIEEVEHENQVLKHHVEQMRKT. The disordered stretch occupies residues 437 to 472; that stretch reads TEYSARSPVESSPSPPRNERKRSRMSTTTPMKNGTR. Transmembrane regions (helical) follow at residues 478-498 and 541-561; these read VTLF…LLAG and MSYV…KLLI.

In terms of processing, processed in the Golgi apparatus, releasing the protein from the membrane. Ubiquitinated; the nuclear form has a rapid turnover and is rapidly ubiquitinated and degraded by the proteasome in the nucleus. As to expression, broadly expressed, including many cells in the head. Expressed in the intestine.

It localises to the nucleus. The protein resides in the endoplasmic reticulum membrane. Transcription factor involved in maintaining normal fat levels. Regulates the expression of genes involved in lipid metabolism in response to nutrient availability, such as the fatty-acid desaturases fat-5, fat-6 and fat-7. In response to a high-glucose diet, promotes fatty acid synthesis, elongation and desaturation, acting in concert with transcription factor mxl-3. Plays a role in synthesis of monomethyl branched-chain fatty acids (mmBCFAs) as well as other very-long-chain fatty acids. Downstream of the cis-Golgi membrane protein eas-1/GOLT1B and the E3 ubiquitin ligase rnf-145/RNF145, plays a role in the regulation of glial size, perhaps by modulating synthesis of long-chain polyunsaturated fatty-acids (LC-PUFA). Modulates expression of genes in the one-carbon cycle, which produces the methyl donor S-adenosylmethionine (SAM). Probably involved in a feedback loop in which decreased levels of SAM lead to increased transcriptional activity of sbp-1, thereby causing lipid accumulation. Involved in the negative regulation of zinc homeostasis. Involved in the response to simulated microgravity, in concert with Mediator complex subunit mdt-15, probably acting in the intestine. Plays a role in transgenerational lipid accumulation in response to a high-fat diet, probably acting by upregulating wdr-5.1 expression to increase the level of trimethylated 'Lys-4' histone H3 (H3K4me3), which may then induce the expression of fat-5, fat-6 and fat-7. May act as an oxygen sensor for lipid metabolism. In terms of biological role, precursor of the transcription factor form, which is embedded in the endoplasmic reticulum membrane. Processing of this form allows release of the transcription factor form that translocates into the nucleus and activates transcription of genes involved in sterol biosynthesis and lipid homeostasis. Its function is as follows. Key transcription factor that regulates expression of genes involved in sterol biosynthesis and lipid homeostasis. In Caenorhabditis elegans, this protein is Sterol regulatory element binding protein sbp-1.